The sequence spans 187 residues: UPF0301 protein PBPRA3139 (187 aa).

This sequence belongs to the UPF0301 (AlgH) family.

This Photobacterium profundum (strain SS9) protein is UPF0301 protein PBPRA3139.